The sequence spans 190 residues: Cathelicidin-3 (190 aa).

The first 29 residues, 1 to 29 (METQMASPSLGRCSLWLLLLGLLLPSASA), serve as a signal peptide directing secretion. Gln-30 carries the post-translational modification Pyrrolidone carboxylic acid. The propeptide occupies 30–130 (QALSYREAVL…DLNCNELQSV (101 aa)). 2 disulfide bridges follow: Cys-85/Cys-96 and Cys-107/Cys-124. Residues 133 to 151 (LRPRRPRLPRPRPRPRPRP) show a composition bias toward basic residues. Positions 133 to 190 (LRPRRPRLPRPRPRPRPRPRSLPLPRPQPRRIPRPILLPWRPPRPIPRPQPQPIPRWL) are disordered. A compositionally biased stretch (pro residues) spans 172–190 (WRPPRPIPRPQPQPIPRWL).

It belongs to the cathelicidin family.

The protein resides in the secreted. In terms of biological role, exerts, in vitro, a potent antimicrobial activity. Probably due to an impairment of the function of the respiratory chain and of energy-dependent activities in the inner membrane of susceptible microorganisms. The polypeptide is Cathelicidin-3 (CATHL3) (Ovis aries (Sheep)).